The following is a 202-amino-acid chain: Na(+)-translocating NADH-quinone reductase subunit E (202 aa).

The next 6 helical transmembrane spans lie at 11 to 31 (SIFM…FLAV), 41 to 61 (LGVA…IIYF), 81 to 101 (FLGF…LEMV), 114 to 134 (GIYL…LFMV), 144 to 164 (LVYG…LAGI), and 180 to 200 (LGIT…FSGI).

It belongs to the NqrDE/RnfAE family. As to quaternary structure, composed of six subunits; NqrA, NqrB, NqrC, NqrD, NqrE and NqrF.

It is found in the cell inner membrane. The enzyme catalyses a ubiquinone + n Na(+)(in) + NADH + H(+) = a ubiquinol + n Na(+)(out) + NAD(+). Functionally, NQR complex catalyzes the reduction of ubiquinone-1 to ubiquinol by two successive reactions, coupled with the transport of Na(+) ions from the cytoplasm to the periplasm. NqrA to NqrE are probably involved in the second step, the conversion of ubisemiquinone to ubiquinol. This chain is Na(+)-translocating NADH-quinone reductase subunit E, found in Psychromonas ingrahamii (strain DSM 17664 / CCUG 51855 / 37).